A 123-amino-acid chain; its full sequence is MGGGGPPARVQGTEGSQTGGGAVAVSYHPNNLDTKPLSCLPILSNFLLISSNSSLTSSTSSPLLMSSRYASAVEIPSSSAYSSTNSIVASLSRIDTTSFELLMVSRLRSSTPGKPFCSVPSVA.

Residues 1-24 (MGGGGPPARVQGTEGSQTGGGAVA) form a disordered region.

This is an uncharacterized protein from Halorubrum pleomorphic virus 1 (HRPV-1).